A 354-amino-acid polypeptide reads, in one-letter code: Uroporphyrinogen decarboxylase (354 aa).

Substrate contacts are provided by residues 35–39 (RQAGR), Asp-84, Tyr-159, Ser-214, and His-333.

This sequence belongs to the uroporphyrinogen decarboxylase family. In terms of assembly, homodimer.

The protein resides in the cytoplasm. The enzyme catalyses uroporphyrinogen III + 4 H(+) = coproporphyrinogen III + 4 CO2. It functions in the pathway porphyrin-containing compound metabolism; protoporphyrin-IX biosynthesis; coproporphyrinogen-III from 5-aminolevulinate: step 4/4. In terms of biological role, catalyzes the decarboxylation of four acetate groups of uroporphyrinogen-III to yield coproporphyrinogen-III. This chain is Uroporphyrinogen decarboxylase, found in Nocardia farcinica (strain IFM 10152).